Here is a 314-residue protein sequence, read N- to C-terminus: Ribosomal RNA small subunit methyltransferase H (314 aa).

S-adenosyl-L-methionine is bound by residues 33-35, D52, F84, D105, and Q112; that span reads GGH.

The protein belongs to the methyltransferase superfamily. RsmH family.

The protein resides in the cytoplasm. The enzyme catalyses cytidine(1402) in 16S rRNA + S-adenosyl-L-methionine = N(4)-methylcytidine(1402) in 16S rRNA + S-adenosyl-L-homocysteine + H(+). Its function is as follows. Specifically methylates the N4 position of cytidine in position 1402 (C1402) of 16S rRNA. The sequence is that of Ribosomal RNA small subunit methyltransferase H from Lactobacillus delbrueckii subsp. bulgaricus (strain ATCC 11842 / DSM 20081 / BCRC 10696 / JCM 1002 / NBRC 13953 / NCIMB 11778 / NCTC 12712 / WDCM 00102 / Lb 14).